The chain runs to 448 residues: Enolase (448 aa).

Residue glutamine 164 participates in (2R)-2-phosphoglycerate binding. Residue glutamate 206 is the Proton donor of the active site. Mg(2+) contacts are provided by aspartate 243, glutamate 289, and aspartate 316. Residues lysine 341, arginine 370, serine 371, and lysine 392 each coordinate (2R)-2-phosphoglycerate. Lysine 341 functions as the Proton acceptor in the catalytic mechanism.

This sequence belongs to the enolase family. Mg(2+) is required as a cofactor.

Its subcellular location is the cytoplasm. The protein resides in the secreted. It localises to the cell surface. The catalysed reaction is (2R)-2-phosphoglycerate = phosphoenolpyruvate + H2O. It participates in carbohydrate degradation; glycolysis; pyruvate from D-glyceraldehyde 3-phosphate: step 4/5. Catalyzes the reversible conversion of 2-phosphoglycerate (2-PG) into phosphoenolpyruvate (PEP). It is essential for the degradation of carbohydrates via glycolysis. The chain is Enolase from Oenococcus oeni (strain ATCC BAA-331 / PSU-1).